Consider the following 926-residue polypeptide: Nitrate reductase [NADH] (926 aa).

Residues 1–85 (MAASVDRQYH…SDSEEDDDEN (85 aa)) are disordered. Residues 36 to 46 (YTFSNPPSSNG) are compositionally biased toward polar residues. Low complexity predominate over residues 58–73 (DNNSNSNNGSNNNNNR). A Mo-molybdopterin-binding site is contributed by C204. Positions 551–626 (SKMYSMSEVK…LEDFRIGELI (76 aa)) constitute a Cytochrome b5 heme-binding domain. Heme contacts are provided by H586 and H609. The FAD-binding FR-type domain maps to 670-782 (RVKIPCKLIE…KGPLGHIEYL (113 aa)). FAD-binding positions include 722-725 (RAYT), 739-743 (VVKVY), F744, F751, 756-758 (VMS), and T809.

The protein belongs to the nitrate reductase family. In terms of assembly, homodimer. It depends on FAD as a cofactor. Requires heme as cofactor. Mo-molybdopterin serves as cofactor.

The catalysed reaction is nitrite + NAD(+) + H2O = nitrate + NADH + H(+). Functionally, nitrate reductase is a key enzyme involved in the first step of nitrate assimilation in plants, fungi and bacteria. The polypeptide is Nitrate reductase [NADH] (NIA) (Spinacia oleracea (Spinach)).